The following is a 169-amino-acid chain: Peptide deformylase (169 aa).

Fe cation-binding residues include Cys94 and His136. The active site involves Glu137. His140 provides a ligand contact to Fe cation.

Belongs to the polypeptide deformylase family. Requires Fe(2+) as cofactor.

It carries out the reaction N-terminal N-formyl-L-methionyl-[peptide] + H2O = N-terminal L-methionyl-[peptide] + formate. Removes the formyl group from the N-terminal Met of newly synthesized proteins. Requires at least a dipeptide for an efficient rate of reaction. N-terminal L-methionine is a prerequisite for activity but the enzyme has broad specificity at other positions. This is Peptide deformylase from Phenylobacterium zucineum (strain HLK1).